Here is a 100-residue protein sequence, read N- to C-terminus: Aspartyl/glutamyl-tRNA(Asn/Gln) amidotransferase subunit C (100 aa).

Belongs to the GatC family. As to quaternary structure, heterotrimer of A, B and C subunits.

The enzyme catalyses L-glutamyl-tRNA(Gln) + L-glutamine + ATP + H2O = L-glutaminyl-tRNA(Gln) + L-glutamate + ADP + phosphate + H(+). It catalyses the reaction L-aspartyl-tRNA(Asn) + L-glutamine + ATP + H2O = L-asparaginyl-tRNA(Asn) + L-glutamate + ADP + phosphate + 2 H(+). In terms of biological role, allows the formation of correctly charged Asn-tRNA(Asn) or Gln-tRNA(Gln) through the transamidation of misacylated Asp-tRNA(Asn) or Glu-tRNA(Gln) in organisms which lack either or both of asparaginyl-tRNA or glutaminyl-tRNA synthetases. The reaction takes place in the presence of glutamine and ATP through an activated phospho-Asp-tRNA(Asn) or phospho-Glu-tRNA(Gln). This is Aspartyl/glutamyl-tRNA(Asn/Gln) amidotransferase subunit C from Streptococcus pneumoniae (strain P1031).